The sequence spans 172 residues: Adenine phosphoribosyltransferase (172 aa).

It belongs to the purine/pyrimidine phosphoribosyltransferase family. Homodimer.

It is found in the cytoplasm. The enzyme catalyses AMP + diphosphate = 5-phospho-alpha-D-ribose 1-diphosphate + adenine. Its pathway is purine metabolism; AMP biosynthesis via salvage pathway; AMP from adenine: step 1/1. Its function is as follows. Catalyzes a salvage reaction resulting in the formation of AMP, that is energically less costly than de novo synthesis. The chain is Adenine phosphoribosyltransferase from Clostridium botulinum (strain ATCC 19397 / Type A).